A 439-amino-acid chain; its full sequence is MIKIPKIGFVSLGCPKNLVDSERIITKLKAEGYDLVDSYDNADMVIVNTCGFLNSAIDESLEVIGEAIAENGKVLVTGCLGNKADLIKEKHPEVLSITGPQDYENLIEAVHTHAPIFANDFVSLVPPQGIKLTPRHYSYLKISEGCNNTCTFCIIPDIRGKLKSRSIDNIMKEAEKLKNAGVKELLVISQDTSAYGVDIKYKSGIWNNKEYQSNIIDLATALGDLDMWTRLHYVYPYPHVDKIVPLMAQGKILPYLDVPLQHSSPEVLKRMKRPAHTQKTLDRINKWRDICPDITIRSTFIVGFPGETEADFEHLLDFAEKAQLDRVGCFKYSEVEGAKANQFDNLISEEVKQQRLDEFMGLQAQISTDKLQRFVGTEQQVIIDAINKDENYAIGRTKYDAPEVDGQVIIGDALERNLKVGEFATVEITESTEYDLIAD.

Positions 5 to 115 (PKIGFVSLGC…LIEAVHTHAP (111 aa)) constitute an MTTase N-terminal domain. Cys-14, Cys-50, Cys-79, Cys-146, Cys-150, and Cys-153 together coordinate [4Fe-4S] cluster. The Radical SAM core domain maps to 132 to 369 (LTPRHYSYLK…MGLQAQISTD (238 aa)). The region spanning 372-439 (QRFVGTEQQV…ESTEYDLIAD (68 aa)) is the TRAM domain.

It belongs to the methylthiotransferase family. RimO subfamily. [4Fe-4S] cluster is required as a cofactor.

The protein resides in the cytoplasm. The catalysed reaction is L-aspartate(89)-[ribosomal protein uS12]-hydrogen + (sulfur carrier)-SH + AH2 + 2 S-adenosyl-L-methionine = 3-methylsulfanyl-L-aspartate(89)-[ribosomal protein uS12]-hydrogen + (sulfur carrier)-H + 5'-deoxyadenosine + L-methionine + A + S-adenosyl-L-homocysteine + 2 H(+). In terms of biological role, catalyzes the methylthiolation of an aspartic acid residue of ribosomal protein uS12. The sequence is that of Ribosomal protein uS12 methylthiotransferase RimO from Francisella tularensis subsp. novicida (strain U112).